The chain runs to 303 residues: Acetaldehyde dehydrogenase 1 (303 aa).

C130 (acyl-thioester intermediate) is an active-site residue. NAD(+) contacts are provided by residues 161–169 (SVGPGTRKN) and N272.

Belongs to the acetaldehyde dehydrogenase family.

The enzyme catalyses acetaldehyde + NAD(+) + CoA = acetyl-CoA + NADH + H(+). The chain is Acetaldehyde dehydrogenase 1 from Cupriavidus metallidurans (strain ATCC 43123 / DSM 2839 / NBRC 102507 / CH34) (Ralstonia metallidurans).